A 5147-amino-acid chain; its full sequence is Cadherin-related tumor suppressor (5147 aa).

A signal peptide spans 1-35 (MERLLLLFFLLLAGRESLCQTGDTKLELLAPRGRS). Cadherin domains are found at residues 36–156 (YATT…SPEF), 157–270 (PEPS…PPIF), 271–382 (DHSD…DPII), 383–494 (SFRF…EPVF), 495–599 (EKSE…APQF), 600–708 (SQRE…DPQF), 709–820 (YPRH…LEML), 821–942 (ECGQ…APVF), 943–1049 (ALDR…TPVF), 1050–1153 (DHTS…APQF), 1154–1278 (TNST…APEF), 1279–1384 (LRAP…APEF), 1385–1489 (TQSS…PPIF), 1490–1601 (PSTA…APVF), 1602–1713 (VSMN…VPQF), 1714–1823 (EQRS…PPQF), 1824–1922 (LDTP…PPLF), 1923–2027 (EDTV…APIF), 2028–2167 (DPMS…VPVF), 2168–2278 (ISAN…SPVF), 2279–2385 (DPKQ…PTFL), 2386–2491 (DSPY…DPVF), 2492–2596 (ELQS…IPKF), 2597–2703 (DSTT…FPTF), 2704–2810 (AYMA…APVM), 2811–2913 (EQLI…PPKF), 2914–3013 (TRLF…APEF), 3014–3124 (EHSF…PPKF), 3125–3229 (EQAE…TPRF), 3230–3334 (SVNS…PPVF), 3335–3439 (NHKE…YPQF), 3440–3545 (LQPV…PPEF), 3546–3651 (IKHY…GPTF), and 3652–3756 (TPEG…NPST). Topologically, residues 36–4583 (YATTYEQYAA…GQDAAQVADP (4548 aa)) are extracellular. N-linked (GlcNAc...) asparagine glycosylation is found at N239, N257, N276, N280, N402, and N461. 2 N-linked (GlcNAc...) asparagine glycosylation sites follow: N605 and N631. N1155, N1367, and N1458 each carry an N-linked (GlcNAc...) asparagine glycan. Residues N1751, N1831, and N1880 are each glycosylated (N-linked (GlcNAc...) asparagine). 6 N-linked (GlcNAc...) asparagine glycosylation sites follow: N2080, N2171, N2247, N2290, N2437, and N2581. N-linked (GlcNAc...) asparagine glycosylation occurs at N2799. N2920, N2946, and N2967 each carry an N-linked (GlcNAc...) asparagine glycan. N-linked (GlcNAc...) asparagine glycosylation is found at N3167, N3303, N3386, N3389, and N3525. N-linked (GlcNAc...) asparagine glycans are attached at residues N3852, N3865, and N3905. EGF-like domains follow at residues 3950–4011 (GYEP…EQCS), 4013–4049 (RQDPCLPNPCHSQVQCRRLGSDFQCMCPANRDGKHCE), 4052–4090 (RSDVCYSKPCRNGGSCQRSPDGSSYFCLCRPGFRGNQCE), and 4092–4128 (VSDSCRPNPCLHGGLCVSLKPGYKCNCTPGRYGRHCE). 16 disulfide bridges follow: C3954-C3966, C3960-C3999, C4001-C4010, C4017-C4028, C4022-C4037, C4039-C4048, C4056-C4067, C4061-C4078, C4080-C4089, C4096-C4107, C4101-C4116, C4118-C4127, C4294-C4320, C4325-C4341, C4334-C4350, and C4352-C4361. Residues 4129–4320 (RFSYGFQPLS…LQQKGILAGC (192 aa)) enclose the Laminin G-like 1 domain. Residue N4306 is glycosylated (N-linked (GlcNAc...) asparagine). The 42-residue stretch at 4321 to 4362 (NRQACQPALAAERCGGFAGQCIDRWSSSLCQCGGHLQSPDCS) folds into the EGF-like 5 domain. Positions 4402–4569 (DNQQMRERRA…RYHGKIESGC (168 aa)) constitute a Laminin G-like 2 domain. N-linked (GlcNAc...) asparagine glycans are attached at residues N4414, N4471, N4487, N4539, and N4550. An intrachain disulfide couples C4536 to C4569. The chain crosses the membrane as a helical span at residues 4584-4609 (LSIGFTLVIVFFVILVVAILGSYVIY). The Cytoplasmic segment spans residues 4610 to 5147 (RFRGKQEKIG…NGPAAPEEYV (538 aa)). Positions 4744-4771 (PEHYDLENASSIAPSDIDIVYHYKGYRE) are essential for stability of mitochondrial electron chain complexes I and V, and promotes interaction with ND-24. 3 disordered regions span residues 4787–4850 (AYTH…SQQP), 4871–4921 (TSSS…QTSM), and 4967–5041 (GDVD…PIPP). A compositionally biased stretch (polar residues) spans 4826–4835 (SASRTHQSTP). Low complexity-rich tracts occupy residues 4838-4850 (RLSPSSELSSQQP) and 4891-4918 (SPVMSQLSGQSSSASRQKPGVPQQQAQQ). A Phosphoserine modification is found at S4843. Residues 4972-5008 (HSSTSTDESGNDSFTCSEIEYDNNSLSGDGKYSTSKS) show a composition bias toward polar residues. Phosphoserine occurs at positions 5054 and 5061. The tract at residues 5113-5147 (PDTNGPSQQQQQQTQVVSTLRMPSSNGPAAPEEYV) is disordered. Low complexity predominate over residues 5119-5131 (SQQQQQQTQVVST).

Interacts with Fbxl7. Ft-mito interacts with NADH dehydrogenase subunit ND-24 and with ATP synthase subunit ATPsynC. Post-translationally, phosphorylated by fj on Ser/Thr of cadherin domains. Phosphorylation by fj enhances binding to ds. Phosphorylated in the cytoplasmic domain in a dco-dependent manner which is promoted by ds. In terms of processing, proteolytically cleaved to yield stably associated N- and C-terminal fragments. The C-terminal fragment is processed further to release a 68 kDa mitochondrial fragment, Ft-mito.

The protein localises to the cell membrane. It localises to the apical cell membrane. The protein resides in the mitochondrion. Its function is as follows. Involved in regulation of planar cell polarity in the compound eye where it is required for correct specification of the R3 and R4 photoreceptor cells by regulating Fz activity in the R3/R4 precursor cells. This is likely to occur through creation of an ft gradient so that the equatorial R3/R4 precursor cell has a higher level of ft function than its polar neighbor. Also required for planar cell polarity of wing hairs. Mediates heterophilic cell adhesion in vitro and is required to stabilize ds on the cell surface. Involved in regulation of eye imaginal disk size. Upstream component of the Hippo pathway where it is likely to act as a cell surface receptor involved in regulation of tissue size and is required for the localization and stability of ex. Probably acts as a cell surface receptor for ds. Functionally, regulates mitochondrial electron transport chain integrity and promotes oxidative phosphorylation. This chain is Cadherin-related tumor suppressor, found in Drosophila melanogaster (Fruit fly).